Here is a 189-residue protein sequence, read N- to C-terminus: Peptidyl-tRNA hydrolase (189 aa).

Tyrosine 15 is a tRNA binding site. Histidine 20 acts as the Proton acceptor in catalysis. TRNA is bound by residues phenylalanine 66, asparagine 68, and asparagine 114.

It belongs to the PTH family. In terms of assembly, monomer.

The protein localises to the cytoplasm. The enzyme catalyses an N-acyl-L-alpha-aminoacyl-tRNA + H2O = an N-acyl-L-amino acid + a tRNA + H(+). Functionally, hydrolyzes ribosome-free peptidyl-tRNAs (with 1 or more amino acids incorporated), which drop off the ribosome during protein synthesis, or as a result of ribosome stalling. Catalyzes the release of premature peptidyl moieties from peptidyl-tRNA molecules trapped in stalled 50S ribosomal subunits, and thus maintains levels of free tRNAs and 50S ribosomes. The sequence is that of Peptidyl-tRNA hydrolase from Streptococcus pneumoniae (strain Taiwan19F-14).